The chain runs to 667 residues: Tripartite terminase subunit 3 (667 aa).

The short motif at 208–215 (VPRRHGKT) is the Walker A motif element. The Walker B motif signature appears at 301-306 (LLIVDE). Residue Glu306 is the For ATPase activity of the active site. Active-site for nuclease activity residues include Asp459, Glu530, and Asp644.

This sequence belongs to the herpesviridae TRM3 protein family. In terms of assembly, interacts with the terminase subunits TRM1 and TRM2. Interacts with portal protein.

The protein resides in the host nucleus. In terms of biological role, component of the molecular motor that translocates viral genomic DNA in empty capsid during DNA packaging. Forms a tripartite terminase complex together with TRM1 and TRM2 in the host cytoplasm. Once the complex reaches the host nucleus, it interacts with the capsid portal vertex. This portal forms a ring in which genomic DNA is translocated into the capsid. TRM3 carries an RNase H-like nuclease activity that plays an important role for the cleavage of concatemeric viral DNA into unit length genomes. The sequence is that of Tripartite terminase subunit 3 from Human herpesvirus 6A (strain Uganda-1102) (HHV-6 variant A).